Consider the following 185-residue polypeptide: Ribosome-recycling factor (185 aa).

The protein belongs to the RRF family.

The protein resides in the cytoplasm. Functionally, responsible for the release of ribosomes from messenger RNA at the termination of protein biosynthesis. May increase the efficiency of translation by recycling ribosomes from one round of translation to another. This is Ribosome-recycling factor from Aeromonas hydrophila subsp. hydrophila (strain ATCC 7966 / DSM 30187 / BCRC 13018 / CCUG 14551 / JCM 1027 / KCTC 2358 / NCIMB 9240 / NCTC 8049).